Reading from the N-terminus, the 160-residue chain is Transcriptional repressor NrdR (160 aa).

A zinc finger lies at 3-34 (CPRCHHNNSRVIDSRQADDGRAIRRRRECENC). Residues 49-139 (LLVIKKNGDR…VYRQFKDMSV (91 aa)) enclose the ATP-cone domain.

Belongs to the NrdR family. It depends on Zn(2+) as a cofactor.

Functionally, negatively regulates transcription of bacterial ribonucleotide reductase nrd genes and operons by binding to NrdR-boxes. This chain is Transcriptional repressor NrdR, found in Enterococcus faecalis (strain ATCC 700802 / V583).